A 130-amino-acid chain; its full sequence is Large ribosomal subunit protein bL21 (130 aa).

Residues 110-130 (TAPTATEETADATPDTETAAE) are disordered.

This sequence belongs to the bacterial ribosomal protein bL21 family. As to quaternary structure, part of the 50S ribosomal subunit. Contacts protein L20.

Functionally, this protein binds to 23S rRNA in the presence of protein L20. In Nostoc sp. (strain PCC 7120 / SAG 25.82 / UTEX 2576), this protein is Large ribosomal subunit protein bL21.